The chain runs to 1255 residues: TBC1 domain family member 1 (1255 aa).

Ser-146 is subject to Phosphoserine. The segment at 208–228 is disordered; it reads RTDWEAPTGQPSAPGPRPMRK. Ser-229 is modified (phosphoserine; by PKB/AKT1). A Phosphoserine; by AMPK modification is found at Ser-231. The PID domain maps to 238 to 398; it reads LAFRKEFQDA…LHKLCERIEG (161 aa). Residue Ser-489 is modified to Phosphoserine; by PKB/AKT1. At Ser-497 the chain carries Phosphoserine. Phosphothreonine; by PKB/AKT1 is present on Thr-499. 8 positions are modified to phosphoserine: Ser-501, Ser-519, Ser-521, Ser-559, Ser-560, Ser-564, Ser-565, and Ser-579. Disordered regions lie at residues 509-544 and 559-581; these read GNKA…MGDK and SSDD…LSPQ. Residues 519–539 show a composition bias toward low complexity; the sequence is SASVDLDSSTSSTLSNTSKEL. Thr-590 carries the phosphothreonine modification. Disordered stretches follow at residues 595–614 and 621–681; these read PVEC…VSQR and SVST…GNAV. Ser-608 carries the post-translational modification Phosphoserine. Ser-621 carries the phosphoserine; by PKB/AKT1 modification. Residues Ser-660 and Ser-661 each carry the phosphoserine modification. Over residues 670 to 679 the composition is skewed to polar residues; that stretch reads HNSSGEQSGN. A Phosphoserine; by PKB/AKT1 modification is found at Ser-697. Phosphoserine occurs at positions 698 and 699. Ser-700 carries the post-translational modification Phosphoserine; by AMPK. The disordered stretch occupies residues 764 to 786; the sequence is DSPSRYEDYSELGELPPRSPLEP. Residues Ser-782 and Ser-1028 each carry the phosphoserine modification. The Rab-GAP TBC domain maps to 887–1081; it reads GVPRHHRGEI…RVFDMIFLQG (195 aa). Tyr-1039 carries the post-translational modification Phosphotyrosine. Residue Thr-1218 is modified to Phosphothreonine. The tract at residues 1233–1255 is disordered; it reads LRRQSARPSTPEPDCTQLEPTGD.

As to quaternary structure, interacts with APPL2 (via BAR domain); interaction is dependent of TBC1D1 phosphorylation at Ser-229; interaction diminishes the phosphorylation of TBC1D1 at Thr-590, resulting in inhibition of SLC2A4/GLUT4 translocation and glucose uptake. Insulin-stimulated phosphorylation by AKT family kinases stimulates SLC2A4/GLUT4 translocation. Expressed in highest levels in hematopoietic cells, testis and kidney.

It localises to the nucleus. May act as a GTPase-activating protein for Rab family protein(s). May play a role in the cell cycle and differentiation of various tissues. Involved in the trafficking and translocation of GLUT4-containing vesicles and insulin-stimulated glucose uptake into cells. This is TBC1 domain family member 1 (Tbc1d1) from Mus musculus (Mouse).